Here is a 185-residue protein sequence, read N- to C-terminus: Threonylcarbamoyl-AMP synthase (185 aa).

A YrdC-like domain is found at 4-185 (SFRVQQAARE…LATGEVVRPG (182 aa)).

Belongs to the SUA5 family. TsaC subfamily.

The protein resides in the cytoplasm. It catalyses the reaction L-threonine + hydrogencarbonate + ATP = L-threonylcarbamoyladenylate + diphosphate + H2O. In terms of biological role, required for the formation of a threonylcarbamoyl group on adenosine at position 37 (t(6)A37) in tRNAs that read codons beginning with adenine. Catalyzes the conversion of L-threonine, HCO(3)(-)/CO(2) and ATP to give threonylcarbamoyl-AMP (TC-AMP) as the acyladenylate intermediate, with the release of diphosphate. The chain is Threonylcarbamoyl-AMP synthase from Pseudomonas putida (strain ATCC 700007 / DSM 6899 / JCM 31910 / BCRC 17059 / LMG 24140 / F1).